The following is a 366-amino-acid chain: NADH-quinone oxidoreductase subunit D (366 aa).

Belongs to the complex I 49 kDa subunit family. In terms of assembly, NDH-1 is composed of 14 different subunits. Subunits NuoB, C, D, E, F, and G constitute the peripheral sector of the complex.

It localises to the cell membrane. The enzyme catalyses a quinone + NADH + 5 H(+)(in) = a quinol + NAD(+) + 4 H(+)(out). Functionally, NDH-1 shuttles electrons from NADH, via FMN and iron-sulfur (Fe-S) centers, to quinones in the respiratory chain. The immediate electron acceptor for the enzyme in this species is believed to be a menaquinone. Couples the redox reaction to proton translocation (for every two electrons transferred, four hydrogen ions are translocated across the cytoplasmic membrane), and thus conserves the redox energy in a proton gradient. This is NADH-quinone oxidoreductase subunit D from Bacillus thuringiensis subsp. konkukian (strain 97-27).